We begin with the raw amino-acid sequence, 173 residues long: Transcription factor E (173 aa).

One can recognise an HTH TFE/IIEalpha-type domain in the interval 3-88 (NNPIIQQVLL…TWRATFTKLP (86 aa)).

It belongs to the TFE family. In terms of assembly, monomer. Interaction with RNA polymerase subunits RpoF and RpoE is necessary for Tfe stimulatory transcription activity. Able to interact with Tbp and RNA polymerase in the absence of DNA promoter. Interacts both with the preinitiation and elongation complexes.

In terms of biological role, transcription factor that plays a role in the activation of archaeal genes transcribed by RNA polymerase. Facilitates transcription initiation by enhancing TATA-box recognition by TATA-box-binding protein (Tbp), and transcription factor B (Tfb) and RNA polymerase recruitment. Not absolutely required for transcription in vitro, but particularly important in cases where Tbp or Tfb function is not optimal. It dynamically alters the nucleic acid-binding properties of RNA polymerases by stabilizing the initiation complex and destabilizing elongation complexes. Seems to translocate with the RNA polymerase following initiation and acts by binding to the non template strand of the transcription bubble in elongation complexes. This chain is Transcription factor E, found in Methanococcus aeolicus (strain ATCC BAA-1280 / DSM 17508 / OCM 812 / Nankai-3).